We begin with the raw amino-acid sequence, 203 residues long: Ras-related protein RABD2a (203 aa).

GTP-binding positions include 15-23 (GDSGVGKSC), 33-40 (YVESYIST), 63-67 (DTAGQ), 121-124 (NKSD), and 151-153 (SAK). The Effector region motif lies at 37–45 (YISTIGVDF). Residues 176–203 (QPAGNNARPPTVQIRGQPVAQKNGCCST) are disordered. S-geranylgeranyl cysteine attachment occurs at residues C200 and C201.

It belongs to the small GTPase superfamily. Rab family. Does not interact with GC5.

The protein localises to the golgi apparatus. Its subcellular location is the trans-Golgi network membrane. It localises to the golgi apparatus membrane. Functionally, protein transport. Regulator of membrane traffic from the Golgi apparatus towards the endoplasmic reticulum (ER). The polypeptide is Ras-related protein RABD2a (RABD2A) (Arabidopsis thaliana (Mouse-ear cress)).